The following is a 355-amino-acid chain: 3'-5' exonuclease (355 aa).

The segment at 1–121 is disordered; the sequence is MDKYLIKLPN…PSPEKEKPEK (121 aa). Basic and acidic residues-rich tracts occupy residues 17-29, 36-50, and 72-92; these read VSDK…KETP, AKKD…KENT, and KNLD…ENPP. 2 positions are modified to phosphoserine: Ser105 and Ser113. A 3'-5' exonuclease domain is found at 147–315; sequence VMQWVEKQKE…GQVIYRDLEQ (169 aa). Mg(2+) contacts are provided by Asp164, Glu166, and Asp302.

This sequence belongs to the WRNexo family.

It is found in the nucleus. Functionally, has exonuclease activity on both single-stranded and duplex templates bearing overhangs, but not blunt ended duplex DNA, and cleaves in a 3'-5' direction. Essential for the formation of DNA replication focal centers. Has an important role in maintaining genome stability. This Drosophila ananassae (Fruit fly) protein is 3'-5' exonuclease.